A 95-amino-acid polypeptide reads, in one-letter code: Aspartyl/glutamyl-tRNA(Asn/Gln) amidotransferase subunit C (95 aa).

This sequence belongs to the GatC family. In terms of assembly, heterotrimer of A, B and C subunits.

It carries out the reaction L-glutamyl-tRNA(Gln) + L-glutamine + ATP + H2O = L-glutaminyl-tRNA(Gln) + L-glutamate + ADP + phosphate + H(+). The enzyme catalyses L-aspartyl-tRNA(Asn) + L-glutamine + ATP + H2O = L-asparaginyl-tRNA(Asn) + L-glutamate + ADP + phosphate + 2 H(+). Functionally, allows the formation of correctly charged Asn-tRNA(Asn) or Gln-tRNA(Gln) through the transamidation of misacylated Asp-tRNA(Asn) or Glu-tRNA(Gln) in organisms which lack either or both of asparaginyl-tRNA or glutaminyl-tRNA synthetases. The reaction takes place in the presence of glutamine and ATP through an activated phospho-Asp-tRNA(Asn) or phospho-Glu-tRNA(Gln). The chain is Aspartyl/glutamyl-tRNA(Asn/Gln) amidotransferase subunit C from Nitrobacter winogradskyi (strain ATCC 25391 / DSM 10237 / CIP 104748 / NCIMB 11846 / Nb-255).